Reading from the N-terminus, the 247-residue chain is 2,3-bisphosphoglycerate-dependent phosphoglycerate mutase (247 aa).

Residues 8 to 15 (RHGESQWN), 21 to 22 (TG), R60, 87 to 90 (ERHY), K98, 114 to 115 (RR), and 183 to 184 (GN) each bind substrate. H9 acts as the Tele-phosphohistidine intermediate in catalysis. The active-site Proton donor/acceptor is E87.

It belongs to the phosphoglycerate mutase family. BPG-dependent PGAM subfamily.

It carries out the reaction (2R)-2-phosphoglycerate = (2R)-3-phosphoglycerate. The protein operates within carbohydrate degradation; glycolysis; pyruvate from D-glyceraldehyde 3-phosphate: step 3/5. Catalyzes the interconversion of 2-phosphoglycerate and 3-phosphoglycerate. In Chlorobaculum parvum (strain DSM 263 / NCIMB 8327) (Chlorobium vibrioforme subsp. thiosulfatophilum), this protein is 2,3-bisphosphoglycerate-dependent phosphoglycerate mutase.